Here is a 444-residue protein sequence, read N- to C-terminus: UDP-N-acetylmuramate--L-alanine ligase (444 aa).

110–116 (GAHGKTS) is an ATP binding site.

It belongs to the MurCDEF family.

It localises to the cytoplasm. It carries out the reaction UDP-N-acetyl-alpha-D-muramate + L-alanine + ATP = UDP-N-acetyl-alpha-D-muramoyl-L-alanine + ADP + phosphate + H(+). It participates in cell wall biogenesis; peptidoglycan biosynthesis. Cell wall formation. The chain is UDP-N-acetylmuramate--L-alanine ligase from Streptococcus pneumoniae (strain Hungary19A-6).